The chain runs to 155 residues: Small ribosomal subunit protein uS7c (155 aa).

Belongs to the universal ribosomal protein uS7 family. As to quaternary structure, part of the 30S ribosomal subunit.

It localises to the plastid. The protein localises to the chloroplast. In terms of biological role, one of the primary rRNA binding proteins, it binds directly to 16S rRNA where it nucleates assembly of the head domain of the 30S subunit. This Lactoris fernandeziana protein is Small ribosomal subunit protein uS7c (rps7).